Consider the following 71-residue polypeptide: Translation initiation factor IF-1 (71 aa).

In terms of domain architecture, S1-like spans 1-71 (MAKQSAIEQD…LSKARITYRY (71 aa)).

The protein belongs to the IF-1 family. In terms of assembly, component of the 30S ribosomal translation pre-initiation complex which assembles on the 30S ribosome in the order IF-2 and IF-3, IF-1 and N-formylmethionyl-tRNA(fMet); mRNA recruitment can occur at any time during PIC assembly.

It is found in the cytoplasm. One of the essential components for the initiation of protein synthesis. Stabilizes the binding of IF-2 and IF-3 on the 30S subunit to which N-formylmethionyl-tRNA(fMet) subsequently binds. Helps modulate mRNA selection, yielding the 30S pre-initiation complex (PIC). Upon addition of the 50S ribosomal subunit IF-1, IF-2 and IF-3 are released leaving the mature 70S translation initiation complex. In Flavobacterium johnsoniae (strain ATCC 17061 / DSM 2064 / JCM 8514 / BCRC 14874 / CCUG 350202 / NBRC 14942 / NCIMB 11054 / UW101) (Cytophaga johnsonae), this protein is Translation initiation factor IF-1.